The chain runs to 83 residues: Putative snRNP Sm-like protein (83 aa).

The 73-residue stretch at 9-81 folds into the Sm domain; the sequence is KPMDVLKSAL…VIFVSPSKGD (73 aa).

This sequence belongs to the snRNP Sm proteins family.

The polypeptide is Putative snRNP Sm-like protein (Thermoplasma acidophilum (strain ATCC 25905 / DSM 1728 / JCM 9062 / NBRC 15155 / AMRC-C165)).